The chain runs to 540 residues: Bifunctional pantoate ligase/cytidylate kinase (540 aa).

The segment at 1–280 (MQWLRTVAAL…VGQTRLIDNL (280 aa)) is pantoate--beta-alanine ligase. 28-35 (MGSLHEGH) contributes to the ATP binding site. His35 (proton donor) is an active-site residue. Gln59 is a (R)-pantoate binding site. Gln59 is a beta-alanine binding site. 150–153 (GQKD) contributes to the ATP binding site. Gln156 serves as a coordination point for (R)-pantoate. ATP-binding positions include Val179 and 187 to 190 (YSSR). Residues 281 to 540 (LLSPEGVDPL…RSGAAHFDII (260 aa)) are cytidylate kinase. The interval 288–307 (DPLPQEQQSAVPPSPKRGRR) is disordered.

This sequence in the N-terminal section; belongs to the pantothenate synthetase family. The protein in the C-terminal section; belongs to the cytidylate kinase family. Type 1 subfamily.

It is found in the cytoplasm. The enzyme catalyses (R)-pantoate + beta-alanine + ATP = (R)-pantothenate + AMP + diphosphate + H(+). The catalysed reaction is CMP + ATP = CDP + ADP. It carries out the reaction dCMP + ATP = dCDP + ADP. Its pathway is cofactor biosynthesis; (R)-pantothenate biosynthesis; (R)-pantothenate from (R)-pantoate and beta-alanine: step 1/1. In terms of biological role, catalyzes the condensation of pantoate with beta-alanine in an ATP-dependent reaction via a pantoyl-adenylate intermediate. Functionally, catalyzes the transfer of a phosphate group from ATP to either CMP or dCMP to form CDP or dCDP and ADP, respectively. This is Bifunctional pantoate ligase/cytidylate kinase from Synechococcus sp. (strain JA-3-3Ab) (Cyanobacteria bacterium Yellowstone A-Prime).